Consider the following 341-residue polypeptide: DER1-like family member protein 1 (341 aa).

The Cytoplasmic segment spans residues 1-41; that stretch reads MAGPRNVRTLHGNGGRNNDVMGPKEFWLNIPPITRTLFTLA. A helical membrane pass occupies residues 42–62; the sequence is IVMTIVGRLNLINPWYFIYVW. Over 63-122 the chain is Lumenal; that stretch reads NLTFKKVQIWRLLTSCVMLSSRAMPALMELYSIYDRSSQLERGHFGPGLSNRRGPMVTVD. The helical transmembrane segment at 123–143 threads the bilayer; it reads YAYYLCFCILAITTATTIIYG. The Cytoplasmic portion of the chain corresponds to 144–170; it reads SYYPVVLTSGFISCITYTWSIDNANVQ. A helical membrane pass occupies residues 171–191; sequence IMFYGLIPVWGKYFPLIQLFI. Position 192 (S192) is a topological domain, lumenal. A helical membrane pass occupies residues 193-213; the sequence is FVFNEGDFVISLIGFTTGYLY. Residues 214–341 are Cytoplasmic-facing; the sequence is TCLDTHTLGP…GQTNSPSDSQ (128 aa). 2 stretches are compositionally biased toward polar residues: residues 276–286 and 296–341; these read SSQRETRTFSG and ATLS…SDSQ. The segment at 276–341 is disordered; that stretch reads SSQRETRTFS…GQTNSPSDSQ (66 aa).

Belongs to the derlin family.

The protein localises to the endoplasmic reticulum membrane. Functionally, may be involved in the degradation process of some misfolded endoplasmic reticulum (ER) luminal proteins. Its precise role is however unclear and its inability to complement der1 mutations, suggests either that it is not involved in degradation process of misfolded proteins, or that it participates in the destruction of specific misfolded ER luminal proteins. This Saccharomyces cerevisiae (strain ATCC 204508 / S288c) (Baker's yeast) protein is DER1-like family member protein 1 (DFM1).